A 248-amino-acid polypeptide reads, in one-letter code: PF03932 family protein CutC (248 aa).

This sequence belongs to the CutC family. In terms of assembly, homodimer.

Its subcellular location is the cytoplasm. The chain is PF03932 family protein CutC from Salmonella paratyphi A (strain AKU_12601).